The primary structure comprises 313 residues: 4-hydroxy-3-methylbut-2-enyl diphosphate reductase (313 aa).

Cys-12 contributes to the [4Fe-4S] cluster binding site. Residues His-41 and His-74 each contribute to the (2E)-4-hydroxy-3-methylbut-2-enyl diphosphate site. His-41 and His-74 together coordinate dimethylallyl diphosphate. Positions 41 and 74 each coordinate isopentenyl diphosphate. Cys-96 serves as a coordination point for [4Fe-4S] cluster. A (2E)-4-hydroxy-3-methylbut-2-enyl diphosphate-binding site is contributed by His-124. Residue His-124 coordinates dimethylallyl diphosphate. Position 124 (His-124) interacts with isopentenyl diphosphate. Glu-126 serves as the catalytic Proton donor. Thr-167 is a (2E)-4-hydroxy-3-methylbut-2-enyl diphosphate binding site. [4Fe-4S] cluster is bound at residue Cys-197. Ser-225, Ser-226, Asn-227, and Ser-269 together coordinate (2E)-4-hydroxy-3-methylbut-2-enyl diphosphate. The dimethylallyl diphosphate site is built by Ser-225, Ser-226, Asn-227, and Ser-269. 4 residues coordinate isopentenyl diphosphate: Ser-225, Ser-226, Asn-227, and Ser-269.

Belongs to the IspH family. Requires [4Fe-4S] cluster as cofactor.

The enzyme catalyses isopentenyl diphosphate + 2 oxidized [2Fe-2S]-[ferredoxin] + H2O = (2E)-4-hydroxy-3-methylbut-2-enyl diphosphate + 2 reduced [2Fe-2S]-[ferredoxin] + 2 H(+). It catalyses the reaction dimethylallyl diphosphate + 2 oxidized [2Fe-2S]-[ferredoxin] + H2O = (2E)-4-hydroxy-3-methylbut-2-enyl diphosphate + 2 reduced [2Fe-2S]-[ferredoxin] + 2 H(+). It functions in the pathway isoprenoid biosynthesis; dimethylallyl diphosphate biosynthesis; dimethylallyl diphosphate from (2E)-4-hydroxy-3-methylbutenyl diphosphate: step 1/1. It participates in isoprenoid biosynthesis; isopentenyl diphosphate biosynthesis via DXP pathway; isopentenyl diphosphate from 1-deoxy-D-xylulose 5-phosphate: step 6/6. In terms of biological role, catalyzes the conversion of 1-hydroxy-2-methyl-2-(E)-butenyl 4-diphosphate (HMBPP) into a mixture of isopentenyl diphosphate (IPP) and dimethylallyl diphosphate (DMAPP). Acts in the terminal step of the DOXP/MEP pathway for isoprenoid precursor biosynthesis. In Photobacterium profundum (strain SS9), this protein is 4-hydroxy-3-methylbut-2-enyl diphosphate reductase.